The chain runs to 444 residues: Enolase 1 (444 aa).

H165 and E174 together coordinate substrate. The active-site Proton donor is the E217. Substrate contacts are provided by E303 and D330. K355 (proton acceptor) is an active-site residue. Substrate is bound by residues 382 to 385 (SHRS) and K406.

It belongs to the enolase family. In terms of assembly, homodimer. The cofactor is Mg(2+).

The protein localises to the cytoplasm. The enzyme catalyses (2R)-2-phosphoglycerate = phosphoenolpyruvate + H2O. It participates in carbohydrate degradation; glycolysis; pyruvate from D-glyceraldehyde 3-phosphate: step 4/5. This Toxoplasma gondii protein is Enolase 1 (ENO1).